The following is a 213-amino-acid chain: Leucyl/phenylalanyl-tRNA--protein transferase (213 aa).

It belongs to the L/F-transferase family.

The protein resides in the cytoplasm. It carries out the reaction N-terminal L-lysyl-[protein] + L-leucyl-tRNA(Leu) = N-terminal L-leucyl-L-lysyl-[protein] + tRNA(Leu) + H(+). The catalysed reaction is N-terminal L-arginyl-[protein] + L-leucyl-tRNA(Leu) = N-terminal L-leucyl-L-arginyl-[protein] + tRNA(Leu) + H(+). The enzyme catalyses L-phenylalanyl-tRNA(Phe) + an N-terminal L-alpha-aminoacyl-[protein] = an N-terminal L-phenylalanyl-L-alpha-aminoacyl-[protein] + tRNA(Phe). Its function is as follows. Functions in the N-end rule pathway of protein degradation where it conjugates Leu, Phe and, less efficiently, Met from aminoacyl-tRNAs to the N-termini of proteins containing an N-terminal arginine or lysine. The chain is Leucyl/phenylalanyl-tRNA--protein transferase from Rhodospirillum rubrum (strain ATCC 11170 / ATH 1.1.1 / DSM 467 / LMG 4362 / NCIMB 8255 / S1).